The sequence spans 92 residues: Islet amyloid polypeptide (92 aa).

Residues M1 to A22 form the signal peptide. Positions T23–G34 are excised as a propeptide. C38 and C43 are disulfide-bonded. Y73 bears the Tyrosine amide mark. Residues N77–L92 constitute a propeptide that is removed on maturation.

Belongs to the calcitonin family. In terms of assembly, can form homodimers. Interacts with IDE and INS. Interaction with INS inhibits homodimerization and fibril formation.

The protein localises to the secreted. Its function is as follows. Amylin/IAPP is a glucoregulatory peptide hormone that plays an important role in the regulation of energy homeostasis. Selectively inhibits insulin-stimulated glucose utilization and glycogen deposition in muscle, while not affecting adipocyte glucose metabolism. IAPP function is mediated by the CALCR-RAMPs (AMYRs) receptor complexes. Amylin can also bind CALCR receptor in the absence of RAMPs, although it is more selective for AMYRs. This is Islet amyloid polypeptide (IAPP) from Cavia porcellus (Guinea pig).